The sequence spans 296 residues: 33 kDa chaperonin (296 aa).

2 disulfide bridges follow: C233–C235 and C267–C270.

The protein belongs to the HSP33 family. Post-translationally, under oxidizing conditions two disulfide bonds are formed involving the reactive cysteines. Under reducing conditions zinc is bound to the reactive cysteines and the protein is inactive.

The protein resides in the cytoplasm. Its function is as follows. Redox regulated molecular chaperone. Protects both thermally unfolding and oxidatively damaged proteins from irreversible aggregation. Plays an important role in the bacterial defense system toward oxidative stress. This chain is 33 kDa chaperonin, found in Actinobacillus pleuropneumoniae serotype 7 (strain AP76).